A 141-amino-acid chain; its full sequence is Aspartate 1-decarboxylase (141 aa).

The active-site Schiff-base intermediate with substrate; via pyruvic acid is Ser-25. Residue Ser-25 is modified to Pyruvic acid (Ser). Thr-57 is a substrate binding site. Tyr-58 functions as the Proton donor in the catalytic mechanism. A substrate-binding site is contributed by 73–75 (GAA).

Belongs to the PanD family. In terms of assembly, heterooctamer of four alpha and four beta subunits. Pyruvate is required as a cofactor. In terms of processing, is synthesized initially as an inactive proenzyme, which is activated by self-cleavage at a specific serine bond to produce a beta-subunit with a hydroxyl group at its C-terminus and an alpha-subunit with a pyruvoyl group at its N-terminus.

The protein resides in the cytoplasm. It carries out the reaction L-aspartate + H(+) = beta-alanine + CO2. The protein operates within cofactor biosynthesis; (R)-pantothenate biosynthesis; beta-alanine from L-aspartate: step 1/1. In terms of biological role, catalyzes the pyruvoyl-dependent decarboxylation of aspartate to produce beta-alanine. This chain is Aspartate 1-decarboxylase, found in Salinispora arenicola (strain CNS-205).